The primary structure comprises 393 residues: Lipoyl synthase, mitochondrial (393 aa).

Residues cysteine 115, cysteine 120, cysteine 126, cysteine 146, cysteine 150, cysteine 153, and serine 362 each coordinate [4Fe-4S] cluster. A Radical SAM core domain is found at 131–351 (ETGTATATIM…RILGMDMGFR (221 aa)).

Belongs to the radical SAM superfamily. Lipoyl synthase family. The cofactor is [4Fe-4S] cluster.

The protein resides in the mitochondrion. It carries out the reaction [[Fe-S] cluster scaffold protein carrying a second [4Fe-4S](2+) cluster] + N(6)-octanoyl-L-lysyl-[protein] + 2 oxidized [2Fe-2S]-[ferredoxin] + 2 S-adenosyl-L-methionine + 4 H(+) = [[Fe-S] cluster scaffold protein] + N(6)-[(R)-dihydrolipoyl]-L-lysyl-[protein] + 4 Fe(3+) + 2 hydrogen sulfide + 2 5'-deoxyadenosine + 2 L-methionine + 2 reduced [2Fe-2S]-[ferredoxin]. The protein operates within protein modification; protein lipoylation via endogenous pathway; protein N(6)-(lipoyl)lysine from octanoyl-[acyl-carrier-protein]: step 2/2. Its function is as follows. Catalyzes the radical-mediated insertion of two sulfur atoms into the C-6 and C-8 positions of the octanoyl moiety bound to the lipoyl domains of lipoate-dependent enzymes, thereby converting the octanoylated domains into lipoylated derivatives. This chain is Lipoyl synthase, mitochondrial, found in Vitis vinifera (Grape).